The following is a 357-amino-acid chain: Chaperone protein DnaJ (357 aa).

In terms of domain architecture, J spans 4 to 69 (DYYAILGVDR…QKRKQYDETG (66 aa)). The CR-type zinc-finger motif lies at 132–213 (GASKNVKYRR…CHGTGTVSKN (82 aa)). 8 residues coordinate Zn(2+): C145, C148, C161, C164, C187, C190, C201, and C204. CXXCXGXG motif repeat units follow at residues 145–152 (CEHCSGTG), 161–168 (CPTCHGSG), 187–194 (CRTCHGRG), and 201–208 (CTVCHGTG).

Belongs to the DnaJ family. Homodimer. Zn(2+) serves as cofactor.

It is found in the cytoplasm. Its function is as follows. Participates actively in the response to hyperosmotic and heat shock by preventing the aggregation of stress-denatured proteins and by disaggregating proteins, also in an autonomous, DnaK-independent fashion. Unfolded proteins bind initially to DnaJ; upon interaction with the DnaJ-bound protein, DnaK hydrolyzes its bound ATP, resulting in the formation of a stable complex. GrpE releases ADP from DnaK; ATP binding to DnaK triggers the release of the substrate protein, thus completing the reaction cycle. Several rounds of ATP-dependent interactions between DnaJ, DnaK and GrpE are required for fully efficient folding. Also involved, together with DnaK and GrpE, in the DNA replication of plasmids through activation of initiation proteins. This chain is Chaperone protein DnaJ, found in Picrophilus torridus (strain ATCC 700027 / DSM 9790 / JCM 10055 / NBRC 100828 / KAW 2/3).